Consider the following 173-residue polypeptide: Alpha-crystallin A chain (173 aa).

Met-1 bears the N-acetylmethionine mark. The segment at 1-63 (MDIAIQHPWF…RTVLDSGISE (63 aa)) is required for complex formation with BFSP1 and BFSP2. A Deamidated glutamine; partial modification is found at Gln-6. Ser-45 carries the phosphoserine modification. Position 50 is a deamidated glutamine; partial (Gln-50). The region spanning 52–162 (LFRTVLDSGI…GHSERAIPVS (111 aa)) is the sHSP domain. An N6-acetyllysine mark is found at Lys-70 and Lys-99. A Zn(2+)-binding site is contributed by His-100. Asn-101 carries the post-translational modification Deamidated asparagine; partial. Zn(2+) contacts are provided by Glu-102 and His-107. Position 122 is a phosphoserine (Ser-122). At Asn-123 the chain carries Deamidated asparagine; partial. The segment at 144 to 173 (PKVPSGVDAGHSERAIPVSREEKPSSAPSS) is disordered. The segment covering 153–167 (GHSERAIPVSREEKP) has biased composition (basic and acidic residues). His-154 provides a ligand contact to Zn(2+). A glycan (O-linked (GlcNAc) serine) is linked at Ser-162.

It belongs to the small heat shock protein (HSP20) family. Heteromer composed of three CRYAA and one CRYAB subunits. Inter-subunit bridging via zinc ions enhances stability, which is crucial as there is no protein turn over in the lens. Can also form homodimers and homotetramers (dimers of dimers) which serve as the building blocks of homooligomers. Within homooligomers, the zinc-binding motif is created from residues of 3 different molecules. His-100 and Glu-102 from one molecule are ligands of the zinc ion, and His-107 and His-154 residues from additional molecules complete the site with tetrahedral coordination geometry. Part of a complex required for lens intermediate filament formation composed of BFSP1, BFSP2 and CRYAA. Acetylation at Lys-70 may increase chaperone activity. Post-translationally, undergoes age-dependent proteolytical cleavage at the C-terminus.

The protein resides in the cytoplasm. It is found in the nucleus. Functionally, contributes to the transparency and refractive index of the lens. Acts as a chaperone, preventing aggregation of various proteins under a wide range of stress conditions. Required for the correct formation of lens intermediate filaments as part of a complex composed of BFSP1, BFSP2 and CRYAA. The sequence is that of Alpha-crystallin A chain (CRYAA) from Canis lupus familiaris (Dog).